Consider the following 3391-residue polypeptide: Genome polyprotein (3391 aa).

An interaction with host EXOC1 region spans residues 1–15; it reads MNDQRKKAKNTPFNM. At 1–101 the chain is on the cytoplasmic side; it reads MNDQRKKAKN…LNILNRRRRS (101 aa). The tract at residues 37 to 72 is hydrophobic; homodimerization of capsid protein C; the sequence is MLQGRGPLKLYMALVAFLRFLTIPPTAGILKRWGTI. Residues 101 to 114 constitute a propeptide, ER anchor for the capsid protein C, removed in mature form by serine protease NS3; it reads SAGMIIMLIPTVMA. Residues 102-119 traverse the membrane as a helical segment; it reads AGMIIMLIPTVMAFHLTT. At 120 to 242 the chain is on the extracellular side; that stretch reads RNGEPHMIVS…HVQRIETWIL (123 aa). A glycan (N-linked (GlcNAc...) asparagine; by host) is linked at Asn-183. Residues 243–260 form a helical membrane-spanning segment; it reads RHPGFTMMAAILAYTIGT. A topological domain (cytoplasmic) is located at residue Thr-261. Residues 262-280 form a helical membrane-spanning segment; it reads HFQRALIFILLTAVTPSMT. Over 281-725 the chain is Extracellular; that stretch reads MRCIGMSNRD…LHQVFGAIYG (445 aa). 4 cysteine pairs are disulfide-bonded: Cys-283–Cys-310, Cys-340–Cys-401, Cys-354–Cys-385, and Cys-372–Cys-396. Asn-347 carries N-linked (GlcNAc...) asparagine; by host glycosylation. The interval 378 to 391 is fusion peptide; sequence DRGWGNGCGLFGKG. Asn-433 is a glycosylation site (N-linked (GlcNAc...) asparagine; by host). Cystine bridges form between Cys-465-Cys-565 and Cys-582-Cys-613. Residues 726–746 traverse the membrane as a helical segment; that stretch reads AAFSGVSWTMKILIGVIITWI. Residues 747–752 lie on the Cytoplasmic side of the membrane; sequence GMNSRS. The chain crosses the membrane as a helical span at residues 753-773; the sequence is TSLSVTLVLVGIVTLYLGVMV. Over 774–1195 the chain is Extracellular; it reads QADSGCVVSW…MVGATMTDDI (422 aa). Cystine bridges form between Cys-779–Cys-790, Cys-830–Cys-918, Cys-954–Cys-998, Cys-1055–Cys-1104, Cys-1066–Cys-1088, and Cys-1087–Cys-1091. Asn-905 and Asn-982 each carry an N-linked (GlcNAc...) asparagine; by host glycan. Residues Asn-1134 and Asn-1174 are each glycosylated (N-linked (GlcNAc...) asparagine; by host). A helical transmembrane segment spans residues 1196–1220; that stretch reads GMGVTYLALLAAFKVRPTFAAGLLL. The Cytoplasmic segment spans residues 1221–1226; sequence RKLTSK. Residues 1227–1245 traverse the membrane as a helical segment; that stretch reads ALMMTTIGIVLSSQSTTPE. Residues 1246–1269 lie on the Lumenal side of the membrane; that stretch reads TILELTDALALGMMVLKMVRNMEK. The chain crosses the membrane as a helical span at residues 1270 to 1290; it reads YQLAVTIMAILCVPNAVILQN. Ala-1291 is a topological domain (cytoplasmic). Residues 1292 to 1310 traverse the membrane as a helical segment; it reads WKVSCTILAVVSVSPLFLT. Over 1311-1317 the chain is Lumenal; it reads SSQQKTD. Residues 1318 to 1338 form a helical membrane-spanning segment; the sequence is WIPLALTIKGLNPTAIFLTTL. At 1339–1346 the chain is on the cytoplasmic side; sequence SRTSKKRS. Residues 1347–1367 form a helical membrane-spanning segment; that stretch reads WPLNEAIMAVGMVSILASSLL. Topologically, residues 1368–1370 are lumenal; sequence KND. A helical transmembrane segment spans residues 1371–1391; sequence IPMTGPLVAGGPLTVCYVLTG. The Cytoplasmic portion of the chain corresponds to 1392–1447; sequence RSADLELERAADVKWEDQAEISGSSPILSITISEDGSMSIKNEEEEQTLTILIRTG. The interval 1398–1437 is interacts with and activates NS3 protease; that stretch reads LERAADVKWEDQAEISGSSPILSITISEDGSMSIKNEEEE. Positions 1448–1468 form an intramembrane region, helical; the sequence is LLVISGLFPVSIPITAAAWYL. Residues 1469-2147 are Cytoplasmic-facing; it reads WEVKKQRAGV…LSELPETLET (679 aa). Positions 1476-1653 constitute a Peptidase S7 domain; sequence AGVLWDVPSP…EKSIEDNPEI (178 aa). Active-site charge relay system; for serine protease NS3 activity residues include His-1526, Asp-1550, and Ser-1610. A Helicase ATP-binding domain is found at 1655-1811; it reads DDIFRKRRLT…QSNAPIIDEE (157 aa). Residues 1659-1662 are important for RNA-binding; it reads RKRR. 1668–1675 is an ATP binding site; the sequence is LHPGAGKT. The short motif at 1759–1762 is the DEAH box element; it reads DEAH. In terms of domain architecture, Helicase C-terminal spans 1821–1988; it reads SGHEWVTDFK…IIPSMFEPER (168 aa). Position 1863 is an N6-acetyllysine; by host (Lys-1863). Residues 2148 to 2168 form a helical membrane-spanning segment; that stretch reads LLLLTLLATVTGGILLFLMSG. Residues 2169–2170 are Lumenal-facing; it reads RG. The segment at residues 2171-2191 is an intramembrane region (helical); that stretch reads IGKMTLGMCCIITASILLWYA. Gln-2192 is a topological domain (lumenal). The chain crosses the membrane as a helical span at residues 2193–2213; that stretch reads IQPHWIAASIILEFFLIVLLI. The Cytoplasmic segment spans residues 2214–2228; the sequence is PEPEKQRTPQDNQLT. Residues 2229–2249 traverse the membrane as a helical segment; it reads YVVIAILTVVAATMANEMGFL. Residues 2250-2274 are Lumenal-facing; the sequence is EKTKKDLGLGSIATQQPESNILDID. Positions 2275–2295 form an intramembrane region, helical; sequence LRPASAWTLYAVATTFVTPML. Topologically, residues 2296 to 2316 are lumenal; the sequence is RHSIENSSVNVSLTAIANQAT. 2 N-linked (GlcNAc...) asparagine; by host glycosylation sites follow: Asn-2301 and Asn-2305. Positions 2317–2337 form an intramembrane region, helical; that stretch reads VLMGLGKGWPLSKMDIGVPLL. At 2338 to 2347 the chain is on the lumenal side; sequence AIGCYSQVNP. The chain crosses the membrane as a helical span at residues 2348–2368; it reads TTLTAALFLLVAHYAIIGPAL. At 2369–2413 the chain is on the cytoplasmic side; it reads QAKASREAQKRAAAGIMKNPTVDGITVIDLDPIPYDPKFEKQLGQ. Residues 2414–2434 traverse the membrane as a helical segment; that stretch reads VMLLVLCVTQVLMMRTTWALC. The Lumenal segment spans residues 2435–2459; sequence EVLTLATGPISTLWEGNPGRFWNTT. N-linked (GlcNAc...) asparagine; by host glycosylation is present at Asn-2457. The helical transmembrane segment at 2460-2480 threads the bilayer; that stretch reads IAVSMANIFRGSYLAGAGLLF. Topologically, residues 2481-3391 are cytoplasmic; it reads SIMKNTTNAR…REEEEAGVLW (911 aa). Residues 2493–2755 enclose the mRNA cap 0-1 NS5-type MT domain; that stretch reads TGNIGETLGE…DVDLGSGTRN (263 aa). S-adenosyl-L-methionine is bound at residue Ser-2547. Ser-2547 is subject to Phosphoserine. Lys-2552 acts as the For 2'-O-MTase activity in catalysis. The SUMO-interacting motif signature appears at 2568–2571; the sequence is VVDL. S-adenosyl-L-methionine-binding residues include Gly-2577, Trp-2578, Thr-2595, Lys-2596, Asp-2622, and Val-2623. Asp-2637 serves as the catalytic For 2'-O-MTase activity. Ile-2638 lines the S-adenosyl-L-methionine pocket. Active-site for 2'-O-MTase activity residues include Lys-2672 and Glu-2708. Tyr-2710 serves as a coordination point for S-adenosyl-L-methionine. Residues Glu-2929, His-2933, Cys-2938, and Cys-2941 each coordinate Zn(2+). Positions 3020 to 3169 constitute a RdRp catalytic domain; it reads AMYADDTAGW…PLDDRLPSAL (150 aa). Zn(2+) is bound by residues His-3203, Cys-3219, and Cys-3338.

The protein in the N-terminal section; belongs to the class I-like SAM-binding methyltransferase superfamily. mRNA cap 0-1 NS5-type methyltransferase family. Homodimer. Interacts (via N-terminus) with host EXOC1 (via C-terminus); this interaction results in EXOC1 degradation through the proteasome degradation pathway. In terms of assembly, forms heterodimers with envelope protein E in the endoplasmic reticulum and Golgi. As to quaternary structure, homodimer; in the endoplasmic reticulum and Golgi. Interacts with protein prM. Interacts with non-structural protein 1. Homodimer; Homohexamer when secreted. Interacts with envelope protein E. Interacts with host PRKAA1. In terms of assembly, interacts (via N-terminus) with serine protease NS3. As to quaternary structure, forms a heterodimer with serine protease NS3. May form homooligomers. Forms a heterodimer with NS2B. Interacts with NS4B. Interacts with unphosphorylated RNA-directed RNA polymerase NS5; this interaction stimulates RNA-directed RNA polymerase NS5 guanylyltransferase activity. Interacts with host SHFL. In terms of assembly, interacts with host MAVS; this interaction inhibits the synthesis of IFN-beta. Interacts with host SHFL. Interacts with host AUP1; the interaction occurs in the presence of Dengue virus NS4B and induces lipophagy which facilitates production of virus progeny particles. May interact with host SRPRA and SEC61G. As to quaternary structure, interacts with serine protease NS3. Homodimer. Interacts with host STAT2; this interaction inhibits the phosphorylation of the latter, and, when all viral proteins are present (polyprotein), targets STAT2 for degradation. Interacts with serine protease NS3. Interacts with host PAF1 complex; the interaction may prevent the recruitment of the PAF1 complex to interferon-responsive genes, and thus reduces the immune response. Specific enzymatic cleavages in vivo yield mature proteins. Cleavages in the lumen of endoplasmic reticulum are performed by host signal peptidase, whereas cleavages in the cytoplasmic side are performed by serine protease NS3. Signal cleavage at the 2K-4B site requires a prior NS3 protease-mediated cleavage at the 4A-2K site. Post-translationally, cleaved in post-Golgi vesicles by a host furin, releasing the mature small envelope protein M, and peptide pr. This cleavage is incomplete as up to 30% of viral particles still carry uncleaved prM. In terms of processing, N-glycosylated. N-glycosylated. The excreted form is glycosylated and this is required for efficient secretion of the protein from infected cells. Post-translationally, acetylated by host KAT5. Acetylation modulates NS3 RNA-binding and unwinding activities and plays an important positive role for viral replication. In terms of processing, sumoylation of RNA-directed RNA polymerase NS5 increases NS5 protein stability allowing proper viral RNA replication. Phosphorylated on serines residues. This phosphorylation may trigger NS5 nuclear localization.

It is found in the virion. The protein resides in the host nucleus. The protein localises to the host cytoplasm. It localises to the host perinuclear region. Its subcellular location is the secreted. It is found in the virion membrane. The protein resides in the host endoplasmic reticulum membrane. The protein localises to the host mitochondrion. It carries out the reaction Selective hydrolysis of -Xaa-Xaa-|-Yaa- bonds in which each of the Xaa can be either Arg or Lys and Yaa can be either Ser or Ala.. The catalysed reaction is RNA(n) + a ribonucleoside 5'-triphosphate = RNA(n+1) + diphosphate. It catalyses the reaction a ribonucleoside 5'-triphosphate + H2O = a ribonucleoside 5'-diphosphate + phosphate + H(+). The enzyme catalyses ATP + H2O = ADP + phosphate + H(+). It carries out the reaction a 5'-end (5'-triphosphoguanosine)-ribonucleoside in mRNA + S-adenosyl-L-methionine = a 5'-end (N(7)-methyl 5'-triphosphoguanosine)-ribonucleoside in mRNA + S-adenosyl-L-homocysteine. The catalysed reaction is a 5'-end (N(7)-methyl 5'-triphosphoguanosine)-ribonucleoside in mRNA + S-adenosyl-L-methionine = a 5'-end (N(7)-methyl 5'-triphosphoguanosine)-(2'-O-methyl-ribonucleoside) in mRNA + S-adenosyl-L-homocysteine + H(+). Functionally, plays a role in virus budding by binding to the cell membrane and gathering the viral RNA into a nucleocapsid that forms the core of a mature virus particle. During virus entry, may induce genome penetration into the host cytoplasm after hemifusion induced by the surface proteins. Can migrate to the cell nucleus where it modulates host functions. Overcomes the anti-viral effects of host EXOC1 by sequestering and degrading the latter through the proteasome degradation pathway. Its function is as follows. Inhibits RNA silencing by interfering with host Dicer. Prevents premature fusion activity of envelope proteins in trans-Golgi by binding to envelope protein E at pH6.0. After virion release in extracellular space, gets dissociated from E dimers. In terms of biological role, acts as a chaperone for envelope protein E during intracellular virion assembly by masking and inactivating envelope protein E fusion peptide. prM is the only viral peptide matured by host furin in the trans-Golgi network probably to avoid catastrophic activation of the viral fusion activity in acidic Golgi compartment prior to virion release. prM-E cleavage is inefficient, and many virions are only partially matured. These uncleaved prM would play a role in immune evasion. Functionally, may play a role in virus budding. Exerts cytotoxic effects by activating a mitochondrial apoptotic pathway through M ectodomain. May display a viroporin activity. Its function is as follows. Binds to host cell surface receptor and mediates fusion between viral and cellular membranes. Envelope protein is synthesized in the endoplasmic reticulum in the form of heterodimer with protein prM. They play a role in virion budding in the ER, and the newly formed immature particle is covered with 60 spikes composed of heterodimer between precursor prM and envelope protein E. The virion is transported to the Golgi apparatus where the low pH causes dissociation of PrM-E heterodimers and formation of E homodimers. prM-E cleavage is inefficient, and many virions are only partially matured. These uncleaved prM would play a role in immune evasion. Involved in immune evasion, pathogenesis and viral replication. Once cleaved off the polyprotein, is targeted to three destinations: the viral replication cycle, the plasma membrane and the extracellular compartment. Essential for viral replication. Required for formation of the replication complex and recruitment of other non-structural proteins to the ER-derived membrane structures. Excreted as a hexameric lipoparticle that plays a role against host immune response. Antagonizing the complement function. Binds to the host macrophages and dendritic cells. Inhibits signal transduction originating from Toll-like receptor 3 (TLR3). In terms of biological role, involved in immune evasion, pathogenesis and viral replication. Once cleaved off the polyprotein, is targeted to three destinations: the viral replication cycle, the plasma membrane and the extracellular compartment. Essential for viral replication. Required for formation of the replication complex and recruitment of other non-structural proteins to the ER-derived membrane structures. Excreted as a hexameric lipoparticle that plays a role against host immune response. Antagonizing the complement function. Binds to the host macrophages and dendritic cells. Inhibits signal transduction originating from Toll-like receptor 3 (TLR3). Mediates complement activation, which may contribute to the pathogenesis of the vascular leakage that occurs in severe dengue disease. Activates autophagy through the AMPK/ERK/mTOR signaling pathway. Mechanistically, acts as the assembly platform for STK11-AMPK interactions and promotes STK11-AMPK interactions. In turn, promotes phosphorylation of the AMPK kinase structural domain and activates AMPK, thereby positively regulating the AMPK/ERK/mTOR signaling pathway and inducing autophagy. Functionally, component of the viral RNA replication complex that functions in virion assembly and antagonizes the host immune response. Its function is as follows. Required cofactor for the serine protease function of NS3. May have membrane-destabilizing activity and form viroporins. Displays three enzymatic activities: serine protease, NTPase and RNA helicase. NS3 serine protease, in association with NS2B, performs its autocleavage and cleaves the polyprotein at dibasic sites in the cytoplasm: C-prM, NS2A-NS2B, NS2B-NS3, NS3-NS4A, NS4A-2K and NS4B-NS5. NS3 RNA helicase binds RNA and unwinds dsRNA in the 3' to 5' direction. In terms of biological role, regulates the ATPase activity of the NS3 helicase activity. NS4A allows NS3 helicase to conserve energy during unwinding. Plays a role in the inhibition of the host innate immune response. Interacts with host MAVS and thereby prevents the interaction between RIGI and MAVS. In turn, IFN-beta production is impaired. Interacts with host AUP1 which mediates induction of lipophagy in host cells and facilitates production of virus progeny particles. Functionally, functions as a signal peptide for NS4B and is required for the interferon antagonism activity of the latter. Its function is as follows. Induces the formation of ER-derived membrane vesicles where the viral replication takes place. Inhibits interferon (IFN)-induced host STAT1 phosphorylation and nuclear translocation, thereby preventing the establishment of cellular antiviral state by blocking the IFN-alpha/beta pathway. Replicates the viral (+) and (-) RNA genome, and performs the capping of genomes in the cytoplasm. NS5 methylates viral RNA cap at guanine N-7 and ribose 2'-O positions. Besides its role in RNA genome replication, also prevents the establishment of cellular antiviral state by blocking the interferon-alpha/beta (IFN-alpha/beta) signaling pathway. Inhibits host TYK2 and STAT2 phosphorylation, thereby preventing activation of JAK-STAT signaling pathway. May reduce immune responses by preventing the recruitment of the host PAF1 complex to interferon-responsive genes. The polypeptide is Genome polyprotein (Aedes aegypti (Yellowfever mosquito)).